Reading from the N-terminus, the 129-residue chain is NADH-quinone oxidoreductase subunit A (129 aa).

3 consecutive transmembrane segments (helical) span residues 14–34 (LAIHVALSAGIVAAIIVVAAW), 67–87 (FLIAALFVIFDMEAAILFAWA), and 95–115 (WLGLIEAAVFIGVLLLALVYL).

It belongs to the complex I subunit 3 family. As to quaternary structure, NDH-1 is composed of 14 different subunits. Subunits NuoA, H, J, K, L, M, N constitute the membrane sector of the complex.

The protein resides in the cell inner membrane. The enzyme catalyses a quinone + NADH + 5 H(+)(in) = a quinol + NAD(+) + 4 H(+)(out). Functionally, NDH-1 shuttles electrons from NADH, via FMN and iron-sulfur (Fe-S) centers, to quinones in the respiratory chain. The immediate electron acceptor for the enzyme in this species is believed to be ubiquinone. Couples the redox reaction to proton translocation (for every two electrons transferred, four hydrogen ions are translocated across the cytoplasmic membrane), and thus conserves the redox energy in a proton gradient. This Rhodopseudomonas palustris (strain ATCC BAA-98 / CGA009) protein is NADH-quinone oxidoreductase subunit A.